The following is a 616-amino-acid chain: MEALFLSSSSSSIVASNKLTRLHNHCVWSTVIRDKKRFGPTWCRVGGGGDGGRNSNAERPIRVSSLLKDRGQVLIREQSSPAMDAETLVLSPNGNGRTIEINGVKTLMPFSGASMVGMKEGLGIISFLQGKKFLITGSTGFLAKVLIEKVLRMAPDVSKIYLLIKAKSKEAAIERLKNEVLDAELFNTLKETHGASYMSFMLTKLIPVTGNICDSNIGLQADSAEEIAKEVDVIINSAANTTFNERYDVALDINTRGPGNLMGFAKKCKKLKLFLQVSTAYVNGQRQGRIMEKPFSMGDCIATENFLEGNRKALDVDREMKLALEAARKGTQNQDEAQKMKDLGLERARSYGWQDTYVFTKAMGEMMINSTRGDVPVVIIRPSVIESTYKDPFPGWMEGNRMMDPIVLCYGKGQLTGFLVDPKGVLDVVPADMVVNATLAAIAKHGMAMSDPEPEINVYQIASSAINPLVFEDLAELLYNHYKTSPCMDSKGDPIMVRLMKLFNSVDDFSDHLWRDAQERSGLMSGMSSVDSKMMQKLKFICKKSVEQAKHLATIYEPYTFYGGRFDNSNTQRLMENMSEDEKREFGFDVGSINWTDYITNVHIPGLRRHVLKGRA.

Residues 1 to 14 (MEALFLSSSSSSIV) constitute a chloroplast transit peptide. Positions 133-143 (FLITGSTGFLA) match the NAD(P)H-binding motif. Catalysis depends on residues tyrosine 357 and lysine 361.

This sequence belongs to the fatty acyl-CoA reductase family. Expressed in the tapetum of anthers.

It is found in the plastid. The protein localises to the chloroplast. It carries out the reaction a long-chain fatty acyl-CoA + 2 NADPH + 2 H(+) = a long-chain primary fatty alcohol + 2 NADP(+) + CoA. The enzyme catalyses hexadecanoyl-CoA + 2 NADPH + 2 H(+) = hexadecan-1-ol + 2 NADP(+) + CoA. It catalyses the reaction hexadecanoyl-[ACP] + 2 NADPH + 2 H(+) = hexadecan-1-ol + holo-[ACP] + 2 NADP(+). Its function is as follows. Catalyzes the reduction of fatty acyl-CoA and -ACP (acyl carrier protein) substrates to fatty alcohols. Triggers the accumulation of C16 and C18 fatty alcohols; converts palmitoyl-acyl carrier protein to the corresponding C16:0 alcohol with NAD(P)H as electron donor, but seems inactive toward palmitoyl- or other acyl-coenzyme A. Also triggers the formation of some C16:0 aldehydes. Involved in the synthesis of the lipid component in sporopollenin. Required for exine patterning of pollen grain by mediating the formation of pollen wall substances. The protein is Fatty acyl-CoA reductase 2, chloroplastic of Arabidopsis thaliana (Mouse-ear cress).